The following is a 537-amino-acid chain: Glutamyl-tRNA reductase, chloroplastic (537 aa).

The N-terminal 48 residues, 1-48 (MMASTTSATAAGGAFAAAKTRAGSSAAGGGACARVAAGGRRRSGVVVR), are a transit peptide targeting the chloroplast. Substrate is bound by residues 134-137 (TCNR), Ser194, 199-201 (EGQ), and Gln205. The active-site Nucleophile is Cys135. 276–281 (GAGKMG) is a binding site for NADP(+).

This sequence belongs to the glutamyl-tRNA reductase family.

It localises to the plastid. Its subcellular location is the chloroplast. The enzyme catalyses (S)-4-amino-5-oxopentanoate + tRNA(Glu) + NADP(+) = L-glutamyl-tRNA(Glu) + NADPH + H(+). The protein operates within porphyrin-containing compound metabolism; protoporphyrin-IX biosynthesis; 5-aminolevulinate from L-glutamyl-tRNA(Glu): step 1/2. In terms of biological role, catalyzes the NADPH-dependent reduction of glutamyl-tRNA(Glu) to glutamate 1-semialdehyde (GSA). This Oryza sativa subsp. japonica (Rice) protein is Glutamyl-tRNA reductase, chloroplastic.